A 360-amino-acid polypeptide reads, in one-letter code: Protein phosphatase methylesterase 1 (360 aa).

Residues 26 to 50 form a disordered region; it reads DEDDIPEPAVMPPTGNSSSTANTED. Residues Ser-167, Asp-192, and His-316 contribute to the active site.

It belongs to the AB hydrolase superfamily.

The enzyme catalyses [phosphatase 2A protein]-C-terminal L-leucine methyl ester + H2O = [phosphatase 2A protein]-C-terminal L-leucine + methanol + H(+). In terms of biological role, demethylates proteins that have been reversibly carboxymethylated. Demethylates the phosphatase PP2A catalytic subunit. Involved in the regulation of filamentous growth. The polypeptide is Protein phosphatase methylesterase 1 (PPE1) (Candida albicans (strain SC5314 / ATCC MYA-2876) (Yeast)).